Here is a 266-residue protein sequence, read N- to C-terminus: 5'-nucleotidase SurE (266 aa).

A divalent metal cation is bound by residues aspartate 8, aspartate 9, serine 39, and asparagine 95.

Belongs to the SurE nucleotidase family. The cofactor is a divalent metal cation.

It localises to the cytoplasm. The enzyme catalyses a ribonucleoside 5'-phosphate + H2O = a ribonucleoside + phosphate. Nucleotidase that shows phosphatase activity on nucleoside 5'-monophosphates. In Syntrophus aciditrophicus (strain SB), this protein is 5'-nucleotidase SurE.